The chain runs to 797 residues: G-type lectin S-receptor-like serine/threonine-protein kinase SD2-2 (797 aa).

Positions methionine 1–serine 23 are cleaved as a signal peptide. The 116-residue stretch at lysine 24–aspartate 139 folds into the Bulb-type lectin domain. Residues lysine 24–serine 401 lie on the Extracellular side of the membrane. Asparagine 30, asparagine 49, asparagine 150, and asparagine 197 each carry an N-linked (GlcNAc...) asparagine glycan. Residues proline 274–alanine 310 form the EGF-like; atypical domain. 4 cysteine pairs are disulfide-bonded: cysteine 278-cysteine 290, cysteine 284-cysteine 298, cysteine 359-cysteine 381, and cysteine 363-cysteine 369. In terms of domain architecture, PAN spans cysteine 321–serine 407. Residues asparagine 366 and asparagine 397 are each glycosylated (N-linked (GlcNAc...) asparagine). A helical transmembrane segment spans residues isoleucine 402–proline 422. Residues leucine 423–proline 797 are Cytoplasmic-facing. The 282-residue stretch at asparagine 461–valine 742 folds into the Protein kinase domain. ATP contacts are provided by residues valine 467–valine 475 and lysine 490. The caM-binding stretch occupies residues serine 550–threonine 566. The active-site Proton acceptor is aspartate 585. Positions glycine 767–proline 797 are disordered. Low complexity predominate over residues serine 784–proline 797.

This sequence belongs to the protein kinase superfamily. Ser/Thr protein kinase family. In terms of processing, autophosphorylated. In terms of tissue distribution, expressed in the shoot apex and roots, specifically in lateral roots and at the root-hypocotyl transition zone.

The protein localises to the cell membrane. The enzyme catalyses L-seryl-[protein] + ATP = O-phospho-L-seryl-[protein] + ADP + H(+). The catalysed reaction is L-threonyl-[protein] + ATP = O-phospho-L-threonyl-[protein] + ADP + H(+). Its function is as follows. Serine/threonine-protein kinase. The polypeptide is G-type lectin S-receptor-like serine/threonine-protein kinase SD2-2 (SD22) (Arabidopsis thaliana (Mouse-ear cress)).